The following is a 273-amino-acid chain: Acetyl-coenzyme A carboxylase carboxyl transferase subunit alpha (273 aa).

Residues 1 to 244 form the CoA carboxyltransferase C-terminal domain; sequence MKKATQSKAW…KVVLKQALDE (244 aa).

Belongs to the AccA family. Acetyl-CoA carboxylase is a heterohexamer composed of biotin carboxyl carrier protein (AccB), biotin carboxylase (AccC) and two subunits each of ACCase subunit alpha (AccA) and ACCase subunit beta (AccD).

Its subcellular location is the cytoplasm. It carries out the reaction N(6)-carboxybiotinyl-L-lysyl-[protein] + acetyl-CoA = N(6)-biotinyl-L-lysyl-[protein] + malonyl-CoA. The protein operates within lipid metabolism; malonyl-CoA biosynthesis; malonyl-CoA from acetyl-CoA: step 1/1. Its function is as follows. Component of the acetyl coenzyme A carboxylase (ACC) complex. First, biotin carboxylase catalyzes the carboxylation of biotin on its carrier protein (BCCP) and then the CO(2) group is transferred by the carboxyltransferase to acetyl-CoA to form malonyl-CoA. In Acinetobacter baumannii (strain ACICU), this protein is Acetyl-coenzyme A carboxylase carboxyl transferase subunit alpha.